We begin with the raw amino-acid sequence, 224 residues long: Response regulator protein GraR (224 aa).

A Response regulatory domain is found at 2 to 115 (QVLLVEDDQT…VLIAKLQAIY (114 aa)). Position 51 is a 4-aspartylphosphate (D51). Residues 126–224 (KRTLNWQDAL…KVGKGYMAHE (99 aa)) constitute a DNA-binding region (ompR/PhoB-type).

Post-translationally, phosphorylated by GraS.

It is found in the cytoplasm. In terms of biological role, member of the two-component regulatory system GraR/GraS involved in resistance against cationic antimicrobial peptides (CAMPs). The sequence is that of Response regulator protein GraR (graR) from Staphylococcus haemolyticus (strain JCSC1435).